A 363-amino-acid chain; its full sequence is Mitochondrial RNA-splicing protein MRS1 (363 aa).

It is found in the mitochondrion. Functionally, function in mitochondrial RNA splicing in the excision of mitochondrial group I introns aI1 and aI5 beta from COX1 and bI3 from COB transcripts and thus would be involved in obtaining the correct structure of the intron, to allow the RNA catalyzed reactions to occur. The sequence is that of Mitochondrial RNA-splicing protein MRS1 (MRS1) from Saccharomyces paradoxus (Yeast).